A 331-amino-acid chain; its full sequence is Adenosine deaminase (331 aa).

Residues His-12 and His-14 each coordinate Zn(2+). Substrate-binding residues include His-14, Asp-16, and Gly-170. Position 197 (His-197) interacts with Zn(2+). Glu-200 acts as the Proton donor in catalysis. Asp-278 serves as a coordination point for Zn(2+). A substrate-binding site is contributed by Asp-279.

Belongs to the metallo-dependent hydrolases superfamily. Adenosine and AMP deaminases family. Adenosine deaminase subfamily. Zn(2+) is required as a cofactor.

It catalyses the reaction adenosine + H2O + H(+) = inosine + NH4(+). The catalysed reaction is 2'-deoxyadenosine + H2O + H(+) = 2'-deoxyinosine + NH4(+). Its function is as follows. Catalyzes the hydrolytic deamination of adenosine and 2-deoxyadenosine. This chain is Adenosine deaminase, found in Shewanella baltica (strain OS223).